A 177-amino-acid polypeptide reads, in one-letter code: Large ribosomal subunit protein uL6 (177 aa).

This sequence belongs to the universal ribosomal protein uL6 family. In terms of assembly, part of the 50S ribosomal subunit.

In terms of biological role, this protein binds to the 23S rRNA, and is important in its secondary structure. It is located near the subunit interface in the base of the L7/L12 stalk, and near the tRNA binding site of the peptidyltransferase center. The protein is Large ribosomal subunit protein uL6 of Methylobacterium sp. (strain 4-46).